The sequence spans 176 residues: Inner membrane-spanning protein YciB (176 aa).

5 helical membrane-spanning segments follow: residues 3 to 23 (FLFD…WGIF), 49 to 69 (TMLW…LVLH), 72 to 92 (KFIQ…LVAA), 118 to 138 (KLNL…LYVV), and 149 to 169 (FKLF…SLWL).

It belongs to the YciB family.

It localises to the cell inner membrane. Its function is as follows. Plays a role in cell envelope biogenesis, maintenance of cell envelope integrity and membrane homeostasis. The protein is Inner membrane-spanning protein YciB of Burkholderia mallei (strain NCTC 10247).